The sequence spans 1039 residues: Potassium-transporting ATPase alpha chain 2 (1039 aa).

Over 1 to 102 (MHQKTPEIYS…NSLTPPKQTP (102 aa)) the chain is Cytoplasmic. The chain crosses the membrane as a helical span at residues 103–123 (EIVKFLKQMVGGFSILLWVGA). Topologically, residues 124 to 146 (FLCWIAYGIQYSSDKSASLNNVY) are lumenal. A helical transmembrane segment spans residues 147–167 (LGCVLGLVVILTGIFAYYQEA). Topologically, residues 168–303 (KSTNIMSSFN…NEKTPIAIEI (136 aa)) are cytoplasmic. The helical transmembrane segment at 304–323 (EHFVHIVAGVAVSIGILFFI) threads the bilayer. At 324–335 (IAVSLKYQVLDS) the chain is on the lumenal side. A helical membrane pass occupies residues 336 to 353 (IIFLIGIIVANVPEGLLA). At 354–787 (TVTVTLSLTA…EEGRLIFDNL (434 aa)) the chain is on the cytoplasmic side. Asp-391 (4-aspartylphosphate intermediate) is an active-site residue. Mg(2+) is bound by residues Asp-732 and Asp-736. Residues 788-807 (KKTIAYSLTKNIAELCPFLI) traverse the membrane as a helical segment. The Lumenal portion of the chain corresponds to 808–817 (YIIVGLPLPI). The chain crosses the membrane as a helical span at residues 818-838 (GTITILFIDLGTDIIPSIALA). Topologically, residues 839 to 858 (YEKAESDIMNRKPRHKNKDR) are cytoplasmic. A helical membrane pass occupies residues 859-881 (LVNQPLAVYSYLHIGLMQALGAF). Residues 882–933 (LVYFTVYAQEGFLPRTLINLRVEWEKDYVNDLKDSYGQEWTRYQREYLEWTG) lie on the Lumenal side of the membrane. The helical transmembrane segment at 934–953 (YTAFFVGILVQQIADLIIRK) threads the bilayer. Topologically, residues 954 to 967 (TRRNSIFQQGLFRN) are cytoplasmic. Residue Ser-958 is modified to Phosphoserine; by PKA. Residues 968 to 986 (KVIWVGITSQIIIGLILSY) traverse the membrane as a helical segment. The Lumenal segment spans residues 987–1001 (GLGSVTALSFTMLRA). A helical transmembrane segment spans residues 1002–1022 (QYWFVAVPHAILIWVYDEVRK). Topologically, residues 1023-1039 (LFIRLYPGSWWDKNMYY) are cytoplasmic.

Belongs to the cation transport ATPase (P-type) (TC 3.A.3) family. Type IIC subfamily. The ATPase pump is composed of a catalytic alpha subunit and an auxiliary non-catalytic beta subunit. The alpha subunit pairs with the beta subunit of gastric H(+)/K(+) ATPase ATP4B or the beta subunit of Na(+)/K(+) ATPases ATP1B1 and ATP1B3; this interaction is required for the formation of a functionally active pump and its targeting at the plasma membrane. As to expression, expressed in airway epithelial cells (at protein level). Found in skin and kidney. Detected in prostate basal cells (at protein level). Expression is increased in benign prostate hyperplasia and tumor tissues (at protein level).

The protein localises to the apical cell membrane. The catalysed reaction is K(+)(out) + ATP + H2O + H(+)(in) = K(+)(in) + ADP + phosphate + 2 H(+)(out). It catalyses the reaction K(+)(out) + Na(+)(in) + ATP + H2O = K(+)(in) + Na(+)(out) + ADP + phosphate + H(+). With respect to regulation, the ATPase activity is regulated by monovalent cations and pH. Up-regulated by K(+) ions in a dose-dependent way. Down-regulated by Na(+) ions. Inhibited by Na(+)/K(+)-ATPase inhibitor ouabain and H(+)/K(+)-ATPase inhibitor SCH-28080 with an intermediate sensitivity to completely resistant Na(+)/K(+)-ATPases and highly sensitive H(+)/K(+)-ATPases. Functionally, the catalytic subunit of a H(+)/K(+) ATPase and/or Na(+)/K(+) ATPase pump which transports K(+) ions in exchange for Na(+) and/or H(+) ions across the apical membrane of epithelial cells. Uses ATP as an energy source to pump K(+) ions into the cell while transporting Na(+) and/or H(+) ions to the extracellular compartment. Involved in the maintenance of electrolyte homeostasis through K(+) ion absorption in kidney and colon. In the airway epithelium, may play a primary role in mucus acidification regulating its viscosity and clearance. The chain is Potassium-transporting ATPase alpha chain 2 from Homo sapiens (Human).